The chain runs to 115 residues: Transmembrane protein 218 (115 aa).

3 helical membrane passes run 5 to 25 (VLGV…VLLL), 38 to 58 (FSIV…LLFP), and 81 to 101 (YVLL…LLTH).

This sequence belongs to the TMEM218 family. As to quaternary structure, interacts with TMEM67.

It localises to the membrane. The protein localises to the cell projection. Its subcellular location is the cilium. May be involved in ciliary biogenesis or function. The chain is Transmembrane protein 218 (Tmem218) from Mus musculus (Mouse).